A 317-amino-acid polypeptide reads, in one-letter code: Glutaminase (317 aa).

7 residues coordinate substrate: S67, N118, E162, N169, Y193, Y245, and V263.

The protein belongs to the glutaminase family. Homotetramer.

It carries out the reaction L-glutamine + H2O = L-glutamate + NH4(+). The polypeptide is Glutaminase (Brucella abortus (strain S19)).